Here is a 347-residue protein sequence, read N- to C-terminus: MSVAGLKKQFHKASQLFSEKISGAEGTKLDEEFLDMEKKIDITSKAVAEILSKATEYLQPNPAYRAKLGMLNTMSKLRGQVKATGYPQTEGLLGDCMLKYGRELGEDSAFGNSLVEVGEALKLMAEVKDSLDINVKQTFIDPLQLLQDKDLKEIGHHLRKLEGRRLDYDYKKKRVGKIPEEEIRQAVEKFEESKELAERSMFNFLENDVEQVSQLAVFVEAALDYHRQSTEILQELQNKLELRIALASQVPRRDYMPKPVNTSSTNANGVEPSSSSKLTGTDIPSDQPCCRGLYDFEPENEGELGFKEGDIITLTNQIDENWYEGMLRGESGFFPINYVEVIVPLPR.

The tract at residues 1–21 is membrane-binding amphipathic helix; that stretch reads MSVAGLKKQFHKASQLFSEKI. Residues 18-249 enclose the BAR domain; sequence SEKISGAEGT…LELRIALASQ (232 aa). Residues 60 to 87 are required for dimerization upon membrane association; it reads PNPAYRAKLGMLNTMSKLRGQVKATGYP. Residues 180 to 201 are a coiled coil; it reads EEEIRQAVEKFEESKELAERSM. The segment at 218–254 is interaction with ARC; the sequence is FVEAALDYHRQSTEILQELQNKLELRIALASQVPRRD. Positions 255–284 are disordered; it reads YMPKPVNTSSTNANGVEPSSSSKLTGTDIP. Positions 260 to 284 are enriched in polar residues; it reads VNTSSTNANGVEPSSSSKLTGTDIP. The SH3 domain maps to 285–344; that stretch reads SDQPCCRGLYDFEPENEGELGFKEGDIITLTNQIDENWYEGMLRGESGFFPINYVEVIVP.

It belongs to the endophilin family. In terms of assembly, interacts with SGIP1 and DYDC1. Interacts with FASLG. Interacts with ATXN2. Interacts with BIN2. Interacts with ARC, DNM1 and SYNJ1. In terms of tissue distribution, expressed at high level in testis and at lower level in brain and liver.

The protein resides in the cytoplasm. Its subcellular location is the early endosome membrane. In terms of biological role, implicated in endocytosis. May recruit other proteins to membranes with high curvature. This Rattus norvegicus (Rat) protein is Endophilin-A3 (Sh3gl3).